A 244-amino-acid polypeptide reads, in one-letter code: Phosphoadenosine 5'-phosphosulfate reductase (244 aa).

C239 (nucleophile; cysteine thiosulfonate intermediate) is an active-site residue.

Belongs to the PAPS reductase family. CysH subfamily.

It localises to the cytoplasm. The enzyme catalyses [thioredoxin]-disulfide + sulfite + adenosine 3',5'-bisphosphate + 2 H(+) = [thioredoxin]-dithiol + 3'-phosphoadenylyl sulfate. Its pathway is sulfur metabolism; hydrogen sulfide biosynthesis; sulfite from sulfate: step 3/3. In terms of biological role, catalyzes the formation of sulfite from phosphoadenosine 5'-phosphosulfate (PAPS) using thioredoxin as an electron donor. The sequence is that of Phosphoadenosine 5'-phosphosulfate reductase from Zymomonas mobilis subsp. mobilis (strain ATCC 31821 / ZM4 / CP4).